The following is a 249-amino-acid chain: Triosephosphate isomerase (249 aa).

A substrate-binding site is contributed by 8 to 10 (NWK). The active-site Electrophile is His-95. The active-site Proton acceptor is the Glu-166. Substrate is bound by residues Gly-172, Ser-211, and 232–233 (GG).

The protein belongs to the triosephosphate isomerase family. As to quaternary structure, homodimer.

The protein localises to the cytoplasm. It catalyses the reaction D-glyceraldehyde 3-phosphate = dihydroxyacetone phosphate. It functions in the pathway carbohydrate biosynthesis; gluconeogenesis. It participates in carbohydrate degradation; glycolysis; D-glyceraldehyde 3-phosphate from glycerone phosphate: step 1/1. Functionally, involved in the gluconeogenesis. Catalyzes stereospecifically the conversion of dihydroxyacetone phosphate (DHAP) to D-glyceraldehyde-3-phosphate (G3P). This Granulibacter bethesdensis (strain ATCC BAA-1260 / CGDNIH1) protein is Triosephosphate isomerase.